Consider the following 360-residue polypeptide: Alanine racemase (360 aa).

K36 (proton acceptor; specific for D-alanine) is an active-site residue. K36 bears the N6-(pyridoxal phosphate)lysine mark. R132 is a substrate binding site. Y256 acts as the Proton acceptor; specific for L-alanine in catalysis. Substrate is bound at residue M304.

It belongs to the alanine racemase family. Pyridoxal 5'-phosphate serves as cofactor.

It carries out the reaction L-alanine = D-alanine. It functions in the pathway amino-acid biosynthesis; D-alanine biosynthesis; D-alanine from L-alanine: step 1/1. Its function is as follows. Catalyzes the interconversion of L-alanine and D-alanine. May also act on other amino acids. This is Alanine racemase (alr) from Haemophilus influenzae (strain ATCC 51907 / DSM 11121 / KW20 / Rd).